Reading from the N-terminus, the 422-residue chain is uncharacterized protein (422 aa).

Disordered regions lie at residues 1–21 (MRDN…TTYD), 158–218 (TAKS…TEQV), and 246–271 (DFGT…PWLT). A compositionally biased stretch (polar residues) spans 11 to 21 (AGSNTQQTTYD). The span at 170–199 (SKSSNGSSSTSTTQRGGSSNENKVKALQVA) shows a compositional bias: low complexity. Composition is skewed to polar residues over residues 205–216 (GSQGNSGDQGTE) and 250–261 (APSSSGSGTQDG). Over residues 262 to 271 (TPTPWTPWLT) the composition is skewed to low complexity.

The protein belongs to the adhesin P1 family.

This is an uncharacterized protein from Mycoplasma pneumoniae (strain ATCC 29342 / M129 / Subtype 1) (Mycoplasmoides pneumoniae).